Consider the following 455-residue polypeptide: MTTILKHLPINQRVGIAFSGGLDTSAALLWMQKKGAIPYAYTANLGQPDEEDYEAIPRKAMEYGAEKARLIDCRKQLVAEGIAAIQCGAFHNTTAGVTYFNTTPLGRAVTGTMLVAAMKEDDVNIWGDGSTYKGNDIERFYRYGLLTNAELKIYKPWLDTDFIDELGGRHEMSEFMIQSGFDYKMSTEKAYSTDSNMLGATHEAKDLEFLNSSVKIVNPIMGVKFWDENVVVKAEEVTVRFERGYPVALNGVVFDDSVELMMEANRIGGRHGLGMSDQIENRIIEAKSRGIYEAPGMALLHIAYERLLTGIHNEDTIEQYHANGRVLGRLLYQGRWFDPQALMLRDSIQRWVASEITGEVTLELRRGNDYSILNTVSDNLTYKPERLTMEKGDSVFSPDDRIGQLTMRNLDITDTREKLFNYVETGLLTSSAATGLPQVDNNNLSSGRGLQDKRQ.

ATP contacts are provided by residues 17 to 25 (AFSGGLDTS) and A43. Y99 contacts L-citrulline. ATP-binding residues include G129 and T131. 3 residues coordinate L-aspartate: T131, N135, and D136. Residue N135 participates in L-citrulline binding. D136 is an ATP binding site. L-citrulline contacts are provided by R139 and S192. D194 contacts ATP. Positions 201, 203, and 280 each coordinate L-citrulline. Over residues 434–448 (TGLPQVDNNNLSSGR) the composition is skewed to polar residues. Positions 434 to 455 (TGLPQVDNNNLSSGRGLQDKRQ) are disordered.

The protein belongs to the argininosuccinate synthase family. Type 2 subfamily. As to quaternary structure, homotetramer.

Its subcellular location is the cytoplasm. It catalyses the reaction L-citrulline + L-aspartate + ATP = 2-(N(omega)-L-arginino)succinate + AMP + diphosphate + H(+). Its pathway is amino-acid biosynthesis; L-arginine biosynthesis; L-arginine from L-ornithine and carbamoyl phosphate: step 2/3. In Yersinia pestis, this protein is Argininosuccinate synthase (argG).